Consider the following 432-residue polypeptide: Trigger factor (432 aa).

The region spanning 161-246 (DDRVTIDFVG…LKKIENMVLP (86 aa)) is the PPIase FKBP-type domain.

It belongs to the FKBP-type PPIase family. Tig subfamily.

Its subcellular location is the cytoplasm. The catalysed reaction is [protein]-peptidylproline (omega=180) = [protein]-peptidylproline (omega=0). In terms of biological role, involved in protein export. Acts as a chaperone by maintaining the newly synthesized protein in an open conformation. Functions as a peptidyl-prolyl cis-trans isomerase. The chain is Trigger factor from Haemophilus influenzae (strain PittEE).